Reading from the N-terminus, the 551-residue chain is HTH-type transcriptional regulator SgrR (551 aa).

An HTH marR-type domain is found at 1-116 (MPSARLQQQF…LVSHLGRSFR (116 aa)). Positions 26 to 49 (LNELAALLSCSRRHMRTLLNTMQD) form a DNA-binding region, H-T-H motif. The interval 163-492 (ELEADIAHHW…IDWQADAARW (330 aa)) is solute-binding.

In terms of biological role, activates the small RNA gene sgrS under glucose-phosphate stress conditions as well as yfdZ. Represses its own transcription under both stress and non-stress conditions. Might act as a sensor of the intracellular accumulation of phosphoglucose by binding these molecules in its C-terminal solute-binding domain. The sequence is that of HTH-type transcriptional regulator SgrR from Shigella flexneri serotype 5b (strain 8401).